A 135-amino-acid polypeptide reads, in one-letter code: Holo-[acyl-carrier-protein] synthase (135 aa).

Mg(2+)-binding residues include D9 and E63.

It belongs to the P-Pant transferase superfamily. AcpS family. Mg(2+) serves as cofactor.

The protein localises to the cytoplasm. The enzyme catalyses apo-[ACP] + CoA = holo-[ACP] + adenosine 3',5'-bisphosphate + H(+). In terms of biological role, transfers the 4'-phosphopantetheine moiety from coenzyme A to a Ser of acyl-carrier-protein. The polypeptide is Holo-[acyl-carrier-protein] synthase (Paraburkholderia phymatum (strain DSM 17167 / CIP 108236 / LMG 21445 / STM815) (Burkholderia phymatum)).